A 186-amino-acid polypeptide reads, in one-letter code: Pyridoxal 5'-phosphate synthase subunit PdxT (186 aa).

An L-glutamine-binding site is contributed by 46–48; that stretch reads GES. Cys75 functions as the Nucleophile in the catalytic mechanism. L-glutamine is bound by residues Arg101 and 128-129; that span reads IR. Active-site charge relay system residues include His165 and Glu167.

The protein belongs to the glutaminase PdxT/SNO family. In the presence of PdxS, forms a dodecamer of heterodimers. Only shows activity in the heterodimer.

The catalysed reaction is aldehydo-D-ribose 5-phosphate + D-glyceraldehyde 3-phosphate + L-glutamine = pyridoxal 5'-phosphate + L-glutamate + phosphate + 3 H2O + H(+). It catalyses the reaction L-glutamine + H2O = L-glutamate + NH4(+). It functions in the pathway cofactor biosynthesis; pyridoxal 5'-phosphate biosynthesis. Catalyzes the hydrolysis of glutamine to glutamate and ammonia as part of the biosynthesis of pyridoxal 5'-phosphate. The resulting ammonia molecule is channeled to the active site of PdxS. This is Pyridoxal 5'-phosphate synthase subunit PdxT from Methanocaldococcus jannaschii (strain ATCC 43067 / DSM 2661 / JAL-1 / JCM 10045 / NBRC 100440) (Methanococcus jannaschii).